Here is a 197-residue protein sequence, read N- to C-terminus: ATP synthase subunit delta', mitochondrial (197 aa).

The transit peptide at 1–19 (MFRRATSTFLSRASATRRF) directs the protein to the mitochondrion.

The protein belongs to the ATPase epsilon chain family. F-type ATPases have 2 components, CF(1) - the catalytic core - and CF(0) - the membrane proton channel. CF(1) has five subunits: alpha(3), beta(3), gamma(1), delta(1), epsilon(1). CF(0) has three main subunits: a, b and c.

The protein localises to the mitochondrion. The protein resides in the mitochondrion inner membrane. Mitochondrial membrane ATP synthase (F(1)F(0) ATP synthase or Complex V) produces ATP from ADP in the presence of a proton gradient across the membrane which is generated by electron transport complexes of the respiratory chain. F-type ATPases consist of two structural domains, F(1) - containing the extramembraneous catalytic core, and F(0) - containing the membrane proton channel, linked together by a central stalk and a peripheral stalk. During catalysis, ATP turnover in the catalytic domain of F(1) is coupled via a rotary mechanism of the central stalk subunits to proton translocation. Part of the complex F(1) domain and of the central stalk which is part of the complex rotary element. Rotation of the central stalk against the surrounding alpha(3)beta(3) subunits leads to hydrolysis of ATP in three separate catalytic sites on the beta subunits. The protein is ATP synthase subunit delta', mitochondrial of Pisum sativum (Garden pea).